The following is a 250-amino-acid chain: Small ribosomal subunit protein uS3 (250 aa).

The region spanning 39-111 (IRTLIKNHYP…KVQINIFEVK (73 aa)) is the KH type-2 domain.

Belongs to the universal ribosomal protein uS3 family. As to quaternary structure, part of the 30S ribosomal subunit. Forms a tight complex with proteins S10 and S14.

In terms of biological role, binds the lower part of the 30S subunit head. Binds mRNA in the 70S ribosome, positioning it for translation. This is Small ribosomal subunit protein uS3 from Phytoplasma vitis (Flavescence doree phytoplasma).